The sequence spans 1276 residues: MRSKARARKLAKSDGDVVNNMYEPNRDLLASHSAEDEAEDSAMSPIPVGPPSPFPTSEDFTPKEGSPYEAPVYIPEDIPIPADFELRESSIPGAGLGVWAKRKMEAGERLGPCVVVPRAAAKETDFGWEQILTDVEVSPQEGCITKISEDLGSEKFCVDANQAGAGSWLKYIRVACSCDDQNLTMCQISEQIYYKVIKDIEPGEELLVHVKEGVYPLGTVPPGLDEEPTFRCDECDELFQSKLDLRRHKKYTCGSVGAALYEGLAEELKPEGLGGGSGQAHECKDCERMFPNKYSLEQHMVIHTEEREYKCDQCPKAFNWKSNLIRHQMSHDSGKRFECENCVKVFTDPSNLQRHIRSQHVGARAHACPDCGKTFATSSGLKQHKHIHSTVKPFICEVCHKSYTQFSNLCRHKRMHADCRTQIKCKDCGQMFSTTSSLNKHRRFCEGKNHYTPGGIFAPGLPLTPSPMMDKAKPSPSLNHASLGFNEYFPSRPHPGSLPFSTAPPTFPALTPGFPGIFPPSLYPRPPLLPPTSLLKSPLNHTQDAKLPSPLGNPALPLVSAVSNSSQGTTAAAGPEEKFESRLEDSCVEKLKTRSSDMSDGSDFEDVNTTTGTDLDTTTGTGSDLDSDVDSDPDKDKGKGKSAEGQPKFGGGLAPPGAPNSVAEVPVFYSQHSFFPPPDEQLLTATGAAGDSIKAIASIAEKYFGPGFMGMQEKKLGSLPYHSAFPFQFLPNFPHSLYPFTDRALAHNLLVKAEPKSPRDALKVGGPSAECPFDLTTKPKDVKPILPMPKGPSAPASGEEQPLDLSIGSRARASQNGGGREPRKNHVYGERKLGAGEGLPQVCPARMPQQPPLHYAKPSPFFMDPIYSRVEKRKVTDPVGALKEKYLRPSPLLFHPQMSAIETMTEKLESFAAMKADSGSSLQPLPHHPFNFRSPPPTLSDPILRKGKERYTCRYCGKIFPRSANLTRHLRTHTGEQPYRCKYCDRSFSISSNLQRHVRNIHNKEKPFKCHLCNRCFGQQTNLDRHLKKHEHENAPVSQHPGVLTNHLGTSASSPTSESDNHALLDEKEDSYFSEIRNFIANSEMNQASTRTEKRADMQIVDGSAQCPGLASEKQEDVEEEDDDDLEEDDEDSLAGKSQDDTVSPAPEPQAAYEDEEDEEPAASLAVGFDHTRRCAEDHEGGLLALEPMPTFGKGLDLRRAAEEAFEVKDVLNSTLDSEALKHTLCRQAKNQAYAMMLSLSEDTPLHTPSQGSLDAWLKVTGATSESGAFHPINHL.

Basic residues predominate over residues 1-10 (MRSKARARKL). Residues 1-68 (MRSKARARKL…DFTPKEGSPY (68 aa)) form a disordered region. Residues 82 to 211 (ADFELRESSI…PGEELLVHVK (130 aa)) form the SET domain. A C2H2-type 1; atypical zinc finger spans residues 230 to 253 (FRCDECDELFQSKLDLRRHKKYTC). C2H2-type zinc fingers lie at residues 281 to 303 (HECK…MVIH), 309 to 331 (YKCD…QMSH), 337 to 360 (FECE…RSQH), 366 to 388 (HACP…KHIH), and 394 to 416 (FICE…KRMH). The segment at 423–445 (IKCKDCGQMFSTTSSLNKHRRFC) adopts a C2H2-type 7; atypical zinc-finger fold. Disordered regions lie at residues 533 to 657 (SLLK…APPG) and 772 to 804 (PFDL…QPLD). A compositionally biased stretch (polar residues) spans 561–570 (AVSNSSQGTT). Basic and acidic residues predominate over residues 575 to 597 (PEEKFESRLEDSCVEKLKTRSSD). Low complexity predominate over residues 609-624 (TTTGTDLDTTTGTGSD). Basic and acidic residues predominate over residues 632–642 (DPDKDKGKGKS). Positions 679–1038 (DEQLLTATGA…KHEHENAPVS (360 aa)) are interaction with CTBP1, CTBP2 and ZNF516. Residues 739 to 1276 (PFTDRALAHN…SGAFHPINHL (538 aa)) form a mediates interaction with SKI and regulation of TGF-beta signaling region. 3 consecutive C2H2-type zinc fingers follow at residues 951-973 (YTCR…LRTH), 979-1002 (YRCK…RNIH), and 1008-1032 (FKCH…KHEH). Disordered stretches follow at residues 1033 to 1065 (ENAP…HALL) and 1105 to 1163 (AQCP…EPAA). Positions 1047–1058 (HLGTSASSPTSE) are enriched in polar residues. Positions 1116–1133 (EDVEEEDDDDLEEDDEDS) are enriched in acidic residues.

Belongs to the PRDM16 family. As to quaternary structure, interacts with CEBPA, CEBPB and CEBPD; the interaction is direct. Interacts with PPARG and PPARA; controls brown adipocytes differentiation. Interacts with CTBP1 and CTBP2; represses the expression of WAT-specific genes. Interacts with PPARGC1A and PPARGC1B; interaction with PPARGC1A or PPARGC1B activates the transcription of BAT-specific gene. Interacts with HDAC1, SKI, SMAD2 and SMAD3; the interaction with SKI promotes the recruitment of SMAD3-HDAC1 complex on the promoter of TGF-beta target genes. Interacts with ZNF516; the interaction is direct and may play a role in the transcription of brown adipose tissue-specific gene. Expressed in uterus and kidney. Expressed in both cardiomyocytes and interstitial cells.

The protein localises to the nucleus. Its subcellular location is the cytoplasm. It catalyses the reaction L-lysyl(9)-[histone H3] + S-adenosyl-L-methionine = N(6)-methyl-L-lysyl(9)-[histone H3] + S-adenosyl-L-homocysteine + H(+). Binds DNA and functions as a transcriptional regulator. Displays histone methyltransferase activity and monomethylates 'Lys-9' of histone H3 (H3K9me1) in vitro. Probably catalyzes the monomethylation of free histone H3 in the cytoplasm which is then transported to the nucleus and incorporated into nucleosomes where SUV39H methyltransferases use it as a substrate to catalyze histone H3 'Lys-9' trimethylation. Likely to be one of the primary histone methyltransferases along with MECOM/PRDM3 that direct cytoplasmic H3K9me1 methylation. Functions in the differentiation of brown adipose tissue (BAT) which is specialized in dissipating chemical energy in the form of heat in response to cold or excess feeding while white adipose tissue (WAT) is specialized in the storage of excess energy and the control of systemic metabolism. Together with CEBPB, regulates the differentiation of myoblastic precursors into brown adipose cells. Functions as a repressor of TGF-beta signaling. Functionally, binds DNA and functions as a transcriptional regulator. Functions as a repressor of TGF-beta signaling. May regulate granulocyte differentiation. In Homo sapiens (Human), this protein is Histone-lysine N-methyltransferase PRDM16.